The sequence spans 159 residues: Ribosomal RNA large subunit methyltransferase H (159 aa).

S-adenosyl-L-methionine-binding positions include Leu76, Gly108, and 127-132; that span reads FGRLTL.

Belongs to the RNA methyltransferase RlmH family. Homodimer.

It localises to the cytoplasm. The enzyme catalyses pseudouridine(1915) in 23S rRNA + S-adenosyl-L-methionine = N(3)-methylpseudouridine(1915) in 23S rRNA + S-adenosyl-L-homocysteine + H(+). In terms of biological role, specifically methylates the pseudouridine at position 1915 (m3Psi1915) in 23S rRNA. The chain is Ribosomal RNA large subunit methyltransferase H from Streptococcus uberis (strain ATCC BAA-854 / 0140J).